Consider the following 287-residue polypeptide: MRSLHILLVFTASLLASLTESAKADSLARTVSVVDNVKVKSRFLRAQTDEKNEERATITLGDRVVSDKAATKDLLQQLLALGTPLEKVQKQFLNIPQMKTFAELSKHPNWKALDKYERMQWQKLKEGETLTFMRLGDRLYSKEKAQEQLLRWVAQKKPVESVYDDLQVAGFAHNTVAARQNWRAYIMYDKWFTAASQMQRNPQQYAKFGTGYHSEQKTTELFEKWAMEGTHIKSVITTLKLNGKSASEMANNENFPALLKYVKLYLDFKPVRDLNAKSRLQARRPIS.

The signal sequence occupies residues 1–24 (MRSLHILLVFTASLLASLTESAKA). The RxLR-dEER motif lies at 42–55 (RFLRAQTDEKNEER). A W1 motif region spans residues 115-138 (KYERMQWQKLKEGETLTFMRLGDR). The tract at residues 148–171 (QLLRWVAQKKPVESVYDDLQVAGF) is W2 motif. Residues 221–244 (LFEKWAMEGTHIKSVITTLKLNGK) form a W3 motif region. Residues 246 to 267 (ASEMANNENFPALLKYVKLYLD) are y motif.

Belongs to the RxLR effector family.

The protein localises to the secreted. The protein resides in the host cytoplasm. Its subcellular location is the host nucleus. It localises to the host nucleolus. It is found in the host cytoskeleton. In terms of biological role, secreted effector that acts as an elicitor of hypersensitive response (HR) specifically on plants carrying defense protein R4, through its interaction with this protein. This chain is RxLR effector protein Avr4, found in Phytophthora infestans (strain T30-4) (Potato late blight agent).